A 1039-amino-acid polypeptide reads, in one-letter code: Error-prone DNA polymerase (1039 aa).

It belongs to the DNA polymerase type-C family. DnaE2 subfamily.

It is found in the cytoplasm. It carries out the reaction DNA(n) + a 2'-deoxyribonucleoside 5'-triphosphate = DNA(n+1) + diphosphate. Functionally, DNA polymerase involved in damage-induced mutagenesis and translesion synthesis (TLS). It is not the major replicative DNA polymerase. This chain is Error-prone DNA polymerase, found in Corynebacterium diphtheriae (strain ATCC 700971 / NCTC 13129 / Biotype gravis).